A 425-amino-acid chain; its full sequence is 3-phosphoshikimate 1-carboxyvinyltransferase (425 aa).

K23, S24, and R28 together coordinate 3-phosphoshikimate. K23 provides a ligand contact to phosphoenolpyruvate. Phosphoenolpyruvate is bound by residues G96 and R124. 6 residues coordinate 3-phosphoshikimate: T170, S171, Q172, S198, D314, and K341. Residue Q172 participates in phosphoenolpyruvate binding. D314 acts as the Proton acceptor in catalysis. R345, R386, and K411 together coordinate phosphoenolpyruvate.

Belongs to the EPSP synthase family. As to quaternary structure, monomer.

It localises to the cytoplasm. It carries out the reaction 3-phosphoshikimate + phosphoenolpyruvate = 5-O-(1-carboxyvinyl)-3-phosphoshikimate + phosphate. It functions in the pathway metabolic intermediate biosynthesis; chorismate biosynthesis; chorismate from D-erythrose 4-phosphate and phosphoenolpyruvate: step 6/7. Functionally, catalyzes the transfer of the enolpyruvyl moiety of phosphoenolpyruvate (PEP) to the 5-hydroxyl of shikimate-3-phosphate (S3P) to produce enolpyruvyl shikimate-3-phosphate and inorganic phosphate. The protein is 3-phosphoshikimate 1-carboxyvinyltransferase of Nostoc sp. (strain PCC 7120 / SAG 25.82 / UTEX 2576).